The primary structure comprises 311 residues: 4-diphosphocytidyl-2-C-methyl-D-erythritol kinase (311 aa).

Residue Lys-16 is part of the active site. An ATP-binding site is contributed by 100-110 (PIGAGLAGGSS). Residue Asp-142 is part of the active site.

This sequence belongs to the GHMP kinase family. IspE subfamily.

The catalysed reaction is 4-CDP-2-C-methyl-D-erythritol + ATP = 4-CDP-2-C-methyl-D-erythritol 2-phosphate + ADP + H(+). It participates in isoprenoid biosynthesis; isopentenyl diphosphate biosynthesis via DXP pathway; isopentenyl diphosphate from 1-deoxy-D-xylulose 5-phosphate: step 3/6. Functionally, catalyzes the phosphorylation of the position 2 hydroxy group of 4-diphosphocytidyl-2C-methyl-D-erythritol. This chain is 4-diphosphocytidyl-2-C-methyl-D-erythritol kinase, found in Prochlorococcus marinus (strain MIT 9215).